Consider the following 155-residue polypeptide: Small ribosomal subunit protein uS7c (155 aa).

Belongs to the universal ribosomal protein uS7 family. As to quaternary structure, part of the 30S ribosomal subunit.

Its subcellular location is the plastid. The protein resides in the chloroplast. Functionally, one of the primary rRNA binding proteins, it binds directly to 16S rRNA where it nucleates assembly of the head domain of the 30S subunit. This chain is Small ribosomal subunit protein uS7c (rps7), found in Spirogyra maxima (Green alga).